Reading from the N-terminus, the 1434-residue chain is DNA-directed RNA polymerase subunit beta (1434 aa).

The protein belongs to the RNA polymerase beta chain family. As to quaternary structure, the RNAP catalytic core consists of 2 alpha, 1 beta, 1 beta' and 1 omega subunit. When a sigma factor is associated with the core the holoenzyme is formed, which can initiate transcription.

The catalysed reaction is RNA(n) + a ribonucleoside 5'-triphosphate = RNA(n+1) + diphosphate. Functionally, DNA-dependent RNA polymerase catalyzes the transcription of DNA into RNA using the four ribonucleoside triphosphates as substrates. This Ureaplasma parvum serovar 3 (strain ATCC 700970) protein is DNA-directed RNA polymerase subunit beta.